We begin with the raw amino-acid sequence, 225 residues long: MGIKDWPEGEGPRDKLLQKGAAYLSDAELLAVLLRNGLAGLNAVDLARSLISEFGGLRNLLCAPKNQVCRLPGVGPVKYAQLQAAAELARRVAQENLQRGQVLTNPDLTRDYLMRQLTDRSYEVFAILLLDSQHRVIQFVELFRGTIDSASVYPREVVSLVLEKKAAAVIVCHNHPSGIAEPSQADRRITERLKNALATIDVSLLDHMVVGDREIVSFAERGWIN.

The MPN domain maps to 102 to 224 (VLTNPDLTRD…IVSFAERGWI (123 aa)). Histidine 173, histidine 175, and aspartate 186 together coordinate Zn(2+). Residues 173-186 (HNHPSGIAEPSQAD) carry the JAMM motif motif.

The protein belongs to the UPF0758 family.

The protein is UPF0758 protein Sputw3181_0338 of Shewanella sp. (strain W3-18-1).